Here is an 882-residue protein sequence, read N- to C-terminus: Homeobox-leucine zipper protein ROC3 (882 aa).

The interval aspartate 104 to histidine 144 is disordered. Residues aspartate 107–proline 119 show a composition bias toward basic and acidic residues. Over residues alanine 133 to alanine 143 the composition is skewed to basic residues. The segment at residues lysine 134–glutamine 193 is a DNA-binding region (homeobox). A coiled-coil region spans residues isoleucine 200–arginine 263. The START domain occupies glutamine 340–serine 584. The span at alanine 782–asparagine 816 shows a compositional bias: low complexity. The disordered stretch occupies residues alanine 782–leucine 820.

Belongs to the HD-ZIP homeobox family. Class IV subfamily.

It localises to the nucleus. In terms of biological role, probable transcription factor. This is Homeobox-leucine zipper protein ROC3 (ROC3) from Oryza sativa subsp. japonica (Rice).